The primary structure comprises 478 residues: Cysteine--tRNA ligase (478 aa).

Cys-27 contacts Zn(2+). The short motif at 29-39 (PTTYNFIHLGN) is the 'HIGH' region element. Positions 207, 232, and 236 each coordinate Zn(2+). Residues 264 to 268 (KMSKS) carry the 'KMSKS' region motif. Lys-267 is an ATP binding site.

The protein belongs to the class-I aminoacyl-tRNA synthetase family. In terms of assembly, monomer. Zn(2+) serves as cofactor.

The protein localises to the cytoplasm. The catalysed reaction is tRNA(Cys) + L-cysteine + ATP = L-cysteinyl-tRNA(Cys) + AMP + diphosphate. The chain is Cysteine--tRNA ligase from Desulforudis audaxviator (strain MP104C).